The sequence spans 212 residues: Small ribosomal subunit protein uS4c (212 aa).

Residues Met-89–Leu-152 enclose the S4 RNA-binding domain.

Belongs to the universal ribosomal protein uS4 family. As to quaternary structure, part of the 30S ribosomal subunit. Contacts protein S5. The interaction surface between S4 and S5 is involved in control of translational fidelity.

It localises to the plastid. The protein localises to the chloroplast. In terms of biological role, one of the primary rRNA binding proteins, it binds directly to 16S rRNA where it nucleates assembly of the body of the 30S subunit. With S5 and S12 plays an important role in translational accuracy. This Staurastrum punctulatum (Green alga) protein is Small ribosomal subunit protein uS4c (rps4).